The chain runs to 154 residues: UPF0225 protein YPDSF_0962 (154 aa).

This sequence belongs to the UPF0225 family.

This chain is UPF0225 protein YPDSF_0962, found in Yersinia pestis (strain Pestoides F).